Here is a 135-residue protein sequence, read N- to C-terminus: UPF0306 protein C8J_1355 (135 aa).

The protein belongs to the UPF0306 family.

The sequence is that of UPF0306 protein C8J_1355 from Campylobacter jejuni subsp. jejuni serotype O:6 (strain 81116 / NCTC 11828).